A 211-amino-acid chain; its full sequence is Regulator of G-protein signaling 2 (211 aa).

Disordered regions lie at residues Gly-14 to Met-33 and Leu-49 to Lys-71. A necessary for membrane association region spans residues Lys-32–Gln-66. Residues Leu-79–Cys-116 form a necessary to inhibit protein synthesis region. Residues Ala-83 to Cys-199 form the RGS domain.

Interacts with GNAQ. Does not interact with GNAI1 and GNAI3. Interacts with EIF2B5. Interacts with PRKG1 (isoform alpha). In terms of processing, phosphorylated by protein kinase C. Phosphorylation by PRKG1 leads to activation of RGS2 activity.

The protein resides in the cell membrane. It is found in the cytoplasm. It localises to the nucleus. The protein localises to the nucleolus. Regulates G protein-coupled receptor signaling cascades. Inhibits signal transduction by increasing the GTPase activity of G protein alpha subunits, thereby driving them into their inactive GDP-bound form. It is involved in the negative regulation of the angiotensin-activated signaling pathway. Plays a role in the regulation of blood pressure in response to signaling via G protein-coupled receptors and GNAQ. Plays a role in regulating the constriction and relaxation of vascular smooth muscle. Binds EIF2B5 and blocks its activity, thereby inhibiting the translation of mRNA into protein. The polypeptide is Regulator of G-protein signaling 2 (RGS2) (Bos taurus (Bovine)).